Here is a 406-residue protein sequence, read N- to C-terminus: Phosphoglycerate kinase (406 aa).

Substrate is bound by residues 23–25, R38, 61–64, R117, and R157; these read DIN and HQGR. Residues E331 and 357 to 360 each bind ATP; that span reads GGHI.

The protein belongs to the phosphoglycerate kinase family. Monomer.

The protein localises to the cytoplasm. The catalysed reaction is (2R)-3-phosphoglycerate + ATP = (2R)-3-phospho-glyceroyl phosphate + ADP. The protein operates within carbohydrate degradation; glycolysis; pyruvate from D-glyceraldehyde 3-phosphate: step 2/5. In Methanopyrus kandleri (strain AV19 / DSM 6324 / JCM 9639 / NBRC 100938), this protein is Phosphoglycerate kinase.